The sequence spans 131 residues: Small ribosomal subunit protein uS8 (131 aa).

This sequence belongs to the universal ribosomal protein uS8 family. Part of the 30S ribosomal subunit. Contacts proteins S5 and S12.

In terms of biological role, one of the primary rRNA binding proteins, it binds directly to 16S rRNA central domain where it helps coordinate assembly of the platform of the 30S subunit. In Ruthia magnifica subsp. Calyptogena magnifica, this protein is Small ribosomal subunit protein uS8.